The chain runs to 536 residues: Quinate permease (536 aa).

Over 1 to 26 the chain is Cytoplasmic; it reads MTLLALKEDRPTPKAVYNWRVYTCAA. Residues 27 to 47 form a helical membrane-spanning segment; the sequence is IASFASCMIGYDSSFIGTTLA. Residues 48–74 lie on the Extracellular side of the membrane; it reads LPSFTKEFDFASYTPGALALLQSNIVS. A helical transmembrane segment spans residues 75 to 95; that stretch reads VYQAGAFFGSLFAFATSYFLG. Over 96-98 the chain is Cytoplasmic; sequence RRR. A helical membrane pass occupies residues 99-119; that stretch reads SLIAFSVVFIIGAAIMLAADG. Residues 120-131 lie on the Extracellular side of the membrane; it reads QRRGVDPIIAGR. Residues 132–152 traverse the membrane as a helical segment; it reads VLAGIGVGGASNMVPIYISEL. Topologically, residues 153–160 are cytoplasmic; it reads APPAVRGR. A helical membrane pass occupies residues 161 to 181; it reads LVGIYELGWQIGGLVGFWINY. Topologically, residues 182–195 are extracellular; it reads GVNTTMAPTRSQWL. The N-linked (GlcNAc...) asparagine glycan is linked to N184. A helical transmembrane segment spans residues 196–216; it reads IPFAVQLIPAGLLFLGSFWIP. At 217-285 the chain is on the cytoplasmic side; that stretch reads ESPRWLFANG…SLKQPKVRWR (69 aa). A helical membrane pass occupies residues 286–306; that stretch reads FFLGGMLFLWQNGSGINAINY. At 307–327 the chain is on the extracellular side; sequence YSPTVFRSIGITGTNTGFLTT. The chain crosses the membrane as a helical span at residues 328-349; sequence GIFGVVKMVLTIIWLLWLVDLV. Residues 350–352 are Cytoplasmic-facing; it reads GRR. A helical membrane pass occupies residues 353 to 373; the sequence is RILFVGATGGSLCMWFIGAYI. The Extracellular segment spans residues 374–389; that stretch reads KIAGPGTTKTEEAKLT. A helical membrane pass occupies residues 390 to 410; it reads SGGIAAIFFFYLWTAFYTPSW. Over 411–435 the chain is Cytoplasmic; that stretch reads NGTPWVINSEMFDQNTRSLGQASAA. A helical transmembrane segment spans residues 436-456; that stretch reads ANNWFWNFIISRFTPQMFIKM. At 457-458 the chain is on the extracellular side; it reads EY. Residues 459-479 form a helical membrane-spanning segment; sequence GVYFFFASLMLLSVVFIYFFI. The Cytoplasmic segment spans residues 480-536; that stretch reads PETKSIPLEAMDRLFAIKSVHNANKILMDELNFDRNPEREQSSLDEKDRVTQTENAV. Positions 516–530 are enriched in basic and acidic residues; the sequence is PEREQSSLDEKDRVT. The tract at residues 516–536 is disordered; that stretch reads PEREQSSLDEKDRVTQTENAV.

This sequence belongs to the major facilitator superfamily. Sugar transporter (TC 2.A.1.1) family.

Its subcellular location is the membrane. The protein is Quinate permease (qa-y) of Neurospora africana.